Here is a 129-residue protein sequence, read N- to C-terminus: Small ribosomal subunit protein uS11 (129 aa).

This sequence belongs to the universal ribosomal protein uS11 family. Part of the 30S ribosomal subunit. Interacts with proteins S7 and S18. Binds to IF-3.

Its function is as follows. Located on the platform of the 30S subunit, it bridges several disparate RNA helices of the 16S rRNA. Forms part of the Shine-Dalgarno cleft in the 70S ribosome. The chain is Small ribosomal subunit protein uS11 from Methylocella silvestris (strain DSM 15510 / CIP 108128 / LMG 27833 / NCIMB 13906 / BL2).